Consider the following 335-residue polypeptide: Anthranilate phosphoribosyltransferase (335 aa).

5-phospho-alpha-D-ribose 1-diphosphate-binding positions include Gly79, 82 to 83 (GD), Thr87, 89 to 92 (NVST), 107 to 115 (KHGSRSVSS), and Ser119. Gly79 contacts anthranilate. Ser91 is a Mg(2+) binding site. Arg165 contributes to the anthranilate binding site. Residues Asp223 and Glu224 each contribute to the Mg(2+) site.

The protein belongs to the anthranilate phosphoribosyltransferase family. In terms of assembly, homodimer. Mg(2+) is required as a cofactor.

It carries out the reaction N-(5-phospho-beta-D-ribosyl)anthranilate + diphosphate = 5-phospho-alpha-D-ribose 1-diphosphate + anthranilate. The protein operates within amino-acid biosynthesis; L-tryptophan biosynthesis; L-tryptophan from chorismate: step 2/5. Catalyzes the transfer of the phosphoribosyl group of 5-phosphorylribose-1-pyrophosphate (PRPP) to anthranilate to yield N-(5'-phosphoribosyl)-anthranilate (PRA). The polypeptide is Anthranilate phosphoribosyltransferase (Helicobacter pylori (strain HPAG1)).